We begin with the raw amino-acid sequence, 452 residues long: Neuronal acetylcholine receptor subunit alpha-5 (452 aa).

The signal sequence occupies residues 1–27 (MVQLLAGRWRPTGARRGTRGGLPELSS). Over 28 to 239 (AAKHEDSLFR…VIKRLPLFYT (212 aa)) the chain is Extracellular. N-linked (GlcNAc...) asparagine glycosylation is found at Asn140, Asn168, and Asn214. An intrachain disulfide couples Cys155 to Cys169. A disulfide bond links Cys219 and Cys220. The next 3 helical transmembrane spans lie at 240 to 260 (LFLI…FYLP), 269 to 289 (LCTS…EIIP), and 302 to 322 (LVFT…AINI). Residues 323-414 (HHRSSSTHNA…KFIAQVLDRM (92 aa)) are Cytoplasmic-facing. The chain crosses the membrane as a helical span at residues 415–435 (FLWTFLLVSIIGTLGLFVPVI). Over 436 to 452 (YKWANIIVPVHIGNTIK) the chain is Extracellular.

Belongs to the ligand-gated ion channel (TC 1.A.9) family. Acetylcholine receptor (TC 1.A.9.1) subfamily. Alpha-5/CHRNA5 sub-subfamily. Neuronal AChR that forms heteropentamers composed of two different type of subunits: alpha and non-alpha (beta). CHRNA5/alpha-5 subunit is only able to form functional nAChRs when co-assembled with another alpha subunit, can be combined to CHRNA4/alpha-4 or CHRNA3/alpha-3 and CHRNB4/beta-4 or CHRNB2/beta-2 to give rise to functional receptors. Interacts with LYPD6.

It localises to the synaptic cell membrane. The protein resides in the cell membrane. The catalysed reaction is Ca(2+)(in) = Ca(2+)(out). The enzyme catalyses K(+)(in) = K(+)(out). It catalyses the reaction Na(+)(in) = Na(+)(out). Activated by a myriad of ligands such as acetylcholine, cytisine, nicotine, choline and epibatidine. In terms of biological role, component of neuronal acetylcholine receptors (nAChRs) that function as pentameric, ligand-gated cation channels with high calcium permeability among other activities. nAChRs are excitatory neurotrasnmitter receptors formed by a collection of nAChR subunits known to mediate synaptic transmission in the nervous system and the neuromuscular junction. Each nAchR subunit confers differential attributes to channel properties, including activation, deactivation and desensitization kinetics, pH sensitivity, cation permeability, and binding to allosteric modulators. Has an accessory rather than functional role and is only able to form functional nAChRs when co-assembled with another beta subunit. Participates in pentameric assemblies along with CHRNA3, CHRNA4, CHRNB2 and CHRNB4. Increases receptor sensitivity to acetylcholine and nicotine when associated with CHRNA4 and CHRNB2. Plays a role in nicotine addiction. In Rattus norvegicus (Rat), this protein is Neuronal acetylcholine receptor subunit alpha-5 (Chrna5).